Reading from the N-terminus, the 440-residue chain is MEGHSNTSVILHTYQQQQPQQLISSIIPQTLSDGYGISAPISQADCSGNSNFVNTNPWNNTTFQAYQTDAQFTNEISVLNYPNVYDDFSKESSNGILSDPSLHGSNSSSSTSDVGSSVDCSISPEPILMPSVKRGRPTENPCWAYFHRIDDQLVKCRLCTKVVRSACATNMTKHLERHHADDYQKVTGQLKLFRMNDVGIRSKMHYEVADNPLSTLPVVTNSYILPKMEPMDTFDPSQYYGMQQDPTLNQQQFIQFEQPQASIDPQTWPLTHFWQNTAQTNIMSHLGEASTSTLGSSVIQEAHKMNPDSNDKSFQLDLEQQNCVIIEQKLDDKPRVTKPTTKPYQKRNRKTEHPVWAFFKRTGDGNAECIICQGVVKSPCSSNFMRHLMRHHSTEYNDVYLKWIEKRNITHPGIHCTSVPPPAFINNETSRTEQTTFSVK.

The tract at residues 96–119 (ILSDPSLHGSNSSSSTSDVGSSVD) is disordered. Positions 98–119 (SDPSLHGSNSSSSTSDVGSSVD) are enriched in low complexity. 2 BED-type zinc fingers span residues 137 to 186 (PTEN…YQKV) and 350 to 399 (KTEH…YNDV). Cysteine 156, cysteine 159, histidine 174, histidine 179, cysteine 369, cysteine 372, histidine 387, and histidine 392 together coordinate Zn(2+).

In terms of biological role, may be directly or indirectly involved in cuticle function. This is Protein dumpy-20 (dpy-20) from Caenorhabditis elegans.